Here is a 434-residue protein sequence, read N- to C-terminus: Cytochrome b-c1 complex subunit 2, mitochondrial (434 aa).

A mitochondrion-targeting transit peptide spans 1 to 31; sequence MYSLNRLPRSAAFKSSANLLRRNASTTSAGG.

This sequence belongs to the peptidase M16 family. UQCRC2/QCR2 subfamily. Component of the ubiquinol-cytochrome c oxidoreductase (cytochrome b-c1 complex, complex III, CIII), a multisubunit enzyme composed of 10 subunits. The complex is composed of 3 respiratory subunits cytochrome b (COB), cytochrome c1 (CYT1) and Rieske protein (RIP1), 2 core protein subunits COR1 and QCR2, and 5 low-molecular weight protein subunits QCR6, QCR7, QCR8, QCR9 and QCR10. The complex exists as an obligatory dimer and forms supercomplexes (SCs) in the inner mitochondrial membrane with a monomer or a dimer of cytochrome c oxidase (complex IV, CIV), resulting in 2 different assemblies (supercomplexes III(2)IV and III(2)IV(2)). Interacts with MRJ1.

It localises to the mitochondrion inner membrane. Component of the ubiquinol-cytochrome c oxidoreductase, a multisubunit transmembrane complex that is part of the mitochondrial electron transport chain which drives oxidative phosphorylation. The respiratory chain contains 3 multisubunit complexes succinate dehydrogenase (complex II, CII), ubiquinol-cytochrome c oxidoreductase (cytochrome b-c1 complex, complex III, CIII) and cytochrome c oxidase (complex IV, CIV), that cooperate to transfer electrons derived from NADH and succinate to molecular oxygen, creating an electrochemical gradient over the inner membrane that drives transmembrane transport and the ATP synthase. The cytochrome b-c1 complex catalyzes electron transfer from ubiquinol to cytochrome c, linking this redox reaction to translocation of protons across the mitochondrial inner membrane, with protons being carried across the membrane as hydrogens on the quinol. In the process called Q cycle, 2 protons are consumed from the matrix, 4 protons are released into the intermembrane space and 2 electrons are passed to cytochrome c. This chain is Cytochrome b-c1 complex subunit 2, mitochondrial, found in Cryptococcus neoformans var. grubii serotype A (strain H99 / ATCC 208821 / CBS 10515 / FGSC 9487) (Filobasidiella neoformans var. grubii).